Consider the following 793-residue polypeptide: Probable exo-1,4-beta-xylosidase xlnD (793 aa).

Residues 1-20 form the signal peptide; that stretch reads MPRVASVAAVLAALLPSALG. 3 N-linked (GlcNAc...) asparagine glycosylation sites follow: N23, N87, and N142. Residue D310 is part of the active site. 11 N-linked (GlcNAc...) asparagine glycosylation sites follow: N326, N385, N404, N440, N477, N518, N559, N614, N652, N679, and N701.

Belongs to the glycosyl hydrolase 3 family.

It is found in the secreted. It catalyses the reaction Hydrolysis of (1-&gt;4)-beta-D-xylans, to remove successive D-xylose residues from the non-reducing termini.. The protein operates within glycan degradation; xylan degradation. Functionally, xylan 1,4-beta-xylosidase involved in the hydrolysis of xylan, a major structural heterogeneous polysaccharide found in plant biomass representing the second most abundant polysaccharide in the biosphere, after cellulose. In Aspergillus terreus (strain NIH 2624 / FGSC A1156), this protein is Probable exo-1,4-beta-xylosidase xlnD (xlnD).